The chain runs to 380 residues: Alcohol dehydrogenase 1 (380 aa).

8 residues coordinate Zn(2+): Cys48, Thr50, His70, Cys100, Cys103, Cys106, Cys114, and Cys178. Positions 50 and 70 each coordinate an alcohol. Thr50 is a binding site for NAD(+). NAD(+) is bound by residues 203-208 (GLGAVG), Asp227, Arg232, Thr273, Val296, 296-298 (VGV), and Arg373.

It belongs to the zinc-containing alcohol dehydrogenase family. Homodimer. Requires Zn(2+) as cofactor.

The protein localises to the cytoplasm. The catalysed reaction is a primary alcohol + NAD(+) = an aldehyde + NADH + H(+). It carries out the reaction a secondary alcohol + NAD(+) = a ketone + NADH + H(+). The chain is Alcohol dehydrogenase 1 (ADH1) from Trifolium repens (Creeping white clover).